Reading from the N-terminus, the 374-residue chain is Zinc finger CCCH domain-containing protein 15 homolog (374 aa).

2 C3H1-type zinc fingers span residues Asp89–Ala116 and Tyr167–Pro197.

It belongs to the ZC3H15/TMA46 family.

The protein is Zinc finger CCCH domain-containing protein 15 homolog of Caenorhabditis briggsae.